The sequence spans 238 residues: Zinc finger protein ZAT6 (238 aa).

Positions 1–15 (MALETLTSPRLSSPM) are enriched in polar residues. The tract at residues 1-42 (MALETLTSPRLSSPMPTLFQDSALGFHGSKGKRSKRSRSEFD) is disordered. The Nuclear localization signal motif lies at 30-38 (KGKRSKRSR). 2 C2H2-type zinc fingers span residues 89 to 111 (YKCSVCDKAFSSYQALGGHKASH) and 148 to 170 (HVCSICHKSFATGQALGGHKRCH). Residues 175–202 (NGGGVSSSVSNSEDVGSTSHVSSGHRGF) form a disordered region. Residues 180–193 (SSSVSNSEDVGSTS) are compositionally biased toward low complexity.

It is found in the nucleus. In terms of biological role, probable transcription factor that regulates root development and phosphate (Pi) acquisition and homeostasis. Probably acts as a repressor of primary root growth and regulates Pi homeostasis through the control of root architecture. In Arabidopsis thaliana (Mouse-ear cress), this protein is Zinc finger protein ZAT6 (ZAT6).